A 156-amino-acid chain; its full sequence is Movement protein P17 (156 aa).

A homodimerization region spans residues 38 to 54; the sequence is AEDAEEEAIAAQEELEF. Disordered regions lie at residues 55 to 80 and 131 to 156; these read PEDE…EVSP and AKYH…IKRG. Positions 57–156 are RNA-binding; it reads DEAQARHSCL…RAAPKLIKRG (100 aa). Serine 71, serine 79, serine 137, and serine 140 each carry phosphoserine. The segment covering 144 to 156 has biased composition (basic residues); the sequence is KLRRAAPKLIKRG.

It belongs to the polerovirus movement protein family. Homodimer. Heterodimer with movement protein P3a. Expressed as a nonphosphorylated 20kDa form and a phosphorylated 22kDa form. Phosphorylated by a host PKC-related kinase. Serine phosphorylation is required for plamodesma targeting.

The protein localises to the host cell junction. Its subcellular location is the host plasmodesma. The protein resides in the host mitochondrion outer membrane. It is found in the host Golgi apparatus. It localises to the host chloroplast envelope. Functionally, together with movement protein P3a, facilitates long-distance movement of virions in host. Transports viral genome to neighboring plant cells directly through plasmosdesmata, without any budding. The movement protein allows efficient cell to cell propagation, by bypassing the host cell wall barrier. Binds ssRNA. This is Movement protein P17 from Solanum tuberosum (Potato).